Consider the following 124-residue polypeptide: Colorectal cancer-associated protein 1 (124 aa).

A helical membrane pass occupies residues 77-97 (LYGCFCVGLVSGMAISVLLLA).

As to expression, expressed in gastrointestinal and immune tissue, as well as prostate, testis and ovary. Expressed in lamina propria and eosinophils but not in epithelial cells. Expression is greater in benign adjacent tissues than in colon tumors.

Its subcellular location is the membrane. The polypeptide is Colorectal cancer-associated protein 1 (COLCA1) (Homo sapiens (Human)).